Consider the following 453-residue polypeptide: Trigger factor (453 aa).

Positions Gly-171 to Val-256 constitute a PPIase FKBP-type domain.

It belongs to the FKBP-type PPIase family. Tig subfamily.

Its subcellular location is the cytoplasm. The catalysed reaction is [protein]-peptidylproline (omega=180) = [protein]-peptidylproline (omega=0). Functionally, involved in protein export. Acts as a chaperone by maintaining the newly synthesized protein in an open conformation. Functions as a peptidyl-prolyl cis-trans isomerase. This is Trigger factor from Rhodopseudomonas palustris (strain BisB5).